The primary structure comprises 146 residues: Globin-1 (146 aa).

The 138-residue stretch at 9–146 folds into the Globin domain; the sequence is QLTADVKKDL…KLVAVVQAAL (138 aa). Heme b is bound at residue H101.

The protein belongs to the globin family. In terms of assembly, homodimer.

It is found in the cytoplasm. In Anadara inaequivalvis (Inequivalve ark), this protein is Globin-1.